A 179-amino-acid chain; its full sequence is Large ribosomal subunit protein uL5 (179 aa).

This sequence belongs to the universal ribosomal protein uL5 family. Part of the 50S ribosomal subunit; part of the 5S rRNA/L5/L18/L25 subcomplex. Contacts the 5S rRNA and the P site tRNA. Forms a bridge to the 30S subunit in the 70S ribosome.

Its function is as follows. This is one of the proteins that bind and probably mediate the attachment of the 5S RNA into the large ribosomal subunit, where it forms part of the central protuberance. In the 70S ribosome it contacts protein S13 of the 30S subunit (bridge B1b), connecting the 2 subunits; this bridge is implicated in subunit movement. Contacts the P site tRNA; the 5S rRNA and some of its associated proteins might help stabilize positioning of ribosome-bound tRNAs. The protein is Large ribosomal subunit protein uL5 of Azotobacter vinelandii (strain DJ / ATCC BAA-1303).